Here is a 152-residue protein sequence, read N- to C-terminus: Deoxyuridine 5'-triphosphate nucleotidohydrolase (152 aa).

Residues 71-73, N84, 88-90, and M98 contribute to the substrate site; these read RSG and LID.

This sequence belongs to the dUTPase family. It depends on Mg(2+) as a cofactor.

It catalyses the reaction dUTP + H2O = dUMP + diphosphate + H(+). Its pathway is pyrimidine metabolism; dUMP biosynthesis; dUMP from dCTP (dUTP route): step 2/2. This enzyme is involved in nucleotide metabolism: it produces dUMP, the immediate precursor of thymidine nucleotides and it decreases the intracellular concentration of dUTP so that uracil cannot be incorporated into DNA. The sequence is that of Deoxyuridine 5'-triphosphate nucleotidohydrolase from Klebsiella pneumoniae (strain 342).